A 404-amino-acid chain; its full sequence is Chorismate synthase (404 aa).

Residues arginine 40 and arginine 46 each contribute to the NADP(+) site. FMN is bound by residues 133–135 (RSS), 266–267 (QA), glycine 313, 328–332 (KPIPT), and arginine 354. The disordered stretch occupies residues 283–320 (PGSQVHDPIEPREDGAQAYPRRTNHAGGTEGGTTTGMP). A disordered region spans residues 337-357 (LDSVDTATGEPEPTRYERSDI).

The protein belongs to the chorismate synthase family. As to quaternary structure, homotetramer. Requires FMNH2 as cofactor.

The catalysed reaction is 5-O-(1-carboxyvinyl)-3-phosphoshikimate = chorismate + phosphate. Its pathway is metabolic intermediate biosynthesis; chorismate biosynthesis; chorismate from D-erythrose 4-phosphate and phosphoenolpyruvate: step 7/7. Functionally, catalyzes the anti-1,4-elimination of the C-3 phosphate and the C-6 proR hydrogen from 5-enolpyruvylshikimate-3-phosphate (EPSP) to yield chorismate, which is the branch point compound that serves as the starting substrate for the three terminal pathways of aromatic amino acid biosynthesis. This reaction introduces a second double bond into the aromatic ring system. In Salinibacter ruber (strain DSM 13855 / M31), this protein is Chorismate synthase.